A 93-amino-acid chain; its full sequence is Phosphoribosyl-ATP pyrophosphatase (93 aa).

It belongs to the PRA-PH family.

It is found in the cytoplasm. It carries out the reaction 1-(5-phospho-beta-D-ribosyl)-ATP + H2O = 1-(5-phospho-beta-D-ribosyl)-5'-AMP + diphosphate + H(+). The protein operates within amino-acid biosynthesis; L-histidine biosynthesis; L-histidine from 5-phospho-alpha-D-ribose 1-diphosphate: step 2/9. This is Phosphoribosyl-ATP pyrophosphatase from Rhodococcus erythropolis (strain PR4 / NBRC 100887).